We begin with the raw amino-acid sequence, 275 residues long: Small ribosomal subunit protein uS2 (275 aa).

The tract at residues 244–275 (REGAEASKKKATVKKKAAPRAASGESAEAAAE) is disordered. Basic residues predominate over residues 252 to 261 (KKATVKKKAA). A compositionally biased stretch (low complexity) spans 262-275 (PRAASGESAEAAAE).

It belongs to the universal ribosomal protein uS2 family.

The chain is Small ribosomal subunit protein uS2 from Thioalkalivibrio sulfidiphilus (strain HL-EbGR7).